Here is a 299-residue protein sequence, read N- to C-terminus: Bifunctional protein FolD (299 aa).

NADP(+)-binding positions include 179–181 (GPG) and Ile-245.

The protein belongs to the tetrahydrofolate dehydrogenase/cyclohydrolase family. As to quaternary structure, homodimer.

The catalysed reaction is (6R)-5,10-methylene-5,6,7,8-tetrahydrofolate + NADP(+) = (6R)-5,10-methenyltetrahydrofolate + NADPH. It carries out the reaction (6R)-5,10-methenyltetrahydrofolate + H2O = (6R)-10-formyltetrahydrofolate + H(+). It participates in one-carbon metabolism; tetrahydrofolate interconversion. Its function is as follows. Catalyzes the oxidation of 5,10-methylenetetrahydrofolate to 5,10-methenyltetrahydrofolate and then the hydrolysis of 5,10-methenyltetrahydrofolate to 10-formyltetrahydrofolate. The polypeptide is Bifunctional protein FolD (Deinococcus radiodurans (strain ATCC 13939 / DSM 20539 / JCM 16871 / CCUG 27074 / LMG 4051 / NBRC 15346 / NCIMB 9279 / VKM B-1422 / R1)).